A 439-amino-acid polypeptide reads, in one-letter code: Protein disulfide-isomerase A6 (439 aa).

Positions 1–19 (MARLGFGLVSCTFFLAASG) are cleaved as a signal peptide. 2 Thioredoxin domains span residues 20–133 (LYSS…ALRQ) and 151–287 (QGRG…EDVA). Residues Cys55 and Cys58 each act as nucleophile in the active site. Cys55 and Cys58 are disulfide-bonded. Phosphoserine is present on residues Ser129, Ser156, and Ser158. The tract at residues 141–160 (GRSGGYSSGKQGRGDSSSKK) is disordered. Active-site nucleophile residues include Cys190 and Cys193. Cys190 and Cys193 are oxidised to a cystine. Residues 400 to 425 (GSFPAITAREPWDGRDGELPVEDDID) form a disordered region. Ser427 is modified (phosphoserine). A Prevents secretion from ER motif is present at residues 436-439 (KDEL).

Belongs to the protein disulfide isomerase family. In terms of assembly, part of a large chaperone multiprotein complex comprising DNAJB11, HSP90B1, HSPA5, HYOU, PDIA2, PDIA4, PDIA6, PPIB, SDF2L1, UGGT1 and very small amounts of ERP29, but not, or at very low levels, CALR nor CANX. Interacts with MICA on the surface of tumor cells, leading to MICA disulfide bond reduction which is required for its release from tumor cells. Interacts with ITGB3 following platelet stimulation. Interacts with ERN1; the interaction is direct. Interacts with EIF2AK3. In terms of tissue distribution, expressed most abundantly in lung and kidney, followed by heart, liver and brain.

The protein localises to the endoplasmic reticulum lumen. It localises to the cell membrane. It is found in the melanosome. The catalysed reaction is Catalyzes the rearrangement of -S-S- bonds in proteins.. In terms of biological role, may function as a chaperone that inhibits aggregation of misfolded proteins. Negatively regulates the unfolded protein response (UPR) through binding to UPR sensors such as ERN1, which in turn inactivates ERN1 signaling. May also regulate the UPR via the EIF2AK3 UPR sensor. Plays a role in platelet aggregation and activation by agonists such as convulxin, collagen and thrombin. The polypeptide is Protein disulfide-isomerase A6 (PDIA6) (Mesocricetus auratus (Golden hamster)).